Reading from the N-terminus, the 428-residue chain is MLDIRLIRKEPKECESRLQKKDPAISLERLLDLDKTVRQLKADSEALLAKRKVLSGQIHKAKVANENADALIQEVNTIADQLVAFETTLQEQEALLEDLMARLPNYPDEDVPVSPDKTGNQVIKGHGEVPTFPFPPKHHMQLNEALQILDFKLPAKTTGSGWPAYCNEGVLLEWALLTYLLNKQQAHGFQLWLPPLLVKRDILFGSGQIPKFDGQYYRVEDGDQSLFLIPTAEVVLNGFHSQEILNEQDLPLCYAAFTPCFRREAGAGGAHERGLVRVHQFHKVEMFAFTTPEQEEVVYQKMLHVVEEILSELQLPYQLSLLSTGDMSFTAKKTIDAEVWLPGQKAFYEVSSISKCGDFQARRSETRYRDAQGKLHFVNTLNGSGLATPRLLVAILENYQQADGSVVIPSVLRPYMNNQEILLPKTVR.

Residue 231-233 (TAE) participates in L-serine binding. ATP-binding positions include 262–264 (RRE) and valine 278. Glutamate 285 is a binding site for L-serine. Residue 349–352 (EVSS) participates in ATP binding. L-serine is bound at residue serine 384.

The protein belongs to the class-II aminoacyl-tRNA synthetase family. Type-1 seryl-tRNA synthetase subfamily. In terms of assembly, homodimer. The tRNA molecule binds across the dimer.

Its subcellular location is the cytoplasm. The enzyme catalyses tRNA(Ser) + L-serine + ATP = L-seryl-tRNA(Ser) + AMP + diphosphate + H(+). It carries out the reaction tRNA(Sec) + L-serine + ATP = L-seryl-tRNA(Sec) + AMP + diphosphate + H(+). Its pathway is aminoacyl-tRNA biosynthesis; selenocysteinyl-tRNA(Sec) biosynthesis; L-seryl-tRNA(Sec) from L-serine and tRNA(Sec): step 1/1. In terms of biological role, catalyzes the attachment of serine to tRNA(Ser). Is also able to aminoacylate tRNA(Sec) with serine, to form the misacylated tRNA L-seryl-tRNA(Sec), which will be further converted into selenocysteinyl-tRNA(Sec). This is Serine--tRNA ligase from Chlamydia trachomatis serovar A (strain ATCC VR-571B / DSM 19440 / HAR-13).